Consider the following 557-residue polypeptide: Glutamine--tRNA ligase (557 aa).

Residues 42-52 (PEPNGYLHIGH) carry the 'HIGH' region motif. Residues 43 to 45 (EPN) and 49 to 55 (HIGHAKS) contribute to the ATP site. Positions 75 and 220 each coordinate L-glutamine. Residues threonine 239 and 270-271 (RL) each bind ATP. The short motif at 277–281 (LTSKR) is the 'KMSKS' region element.

The protein belongs to the class-I aminoacyl-tRNA synthetase family. As to quaternary structure, monomer.

The protein localises to the cytoplasm. The catalysed reaction is tRNA(Gln) + L-glutamine + ATP = L-glutaminyl-tRNA(Gln) + AMP + diphosphate. This is Glutamine--tRNA ligase from Haemophilus influenzae (strain ATCC 51907 / DSM 11121 / KW20 / Rd).